The primary structure comprises 247 residues: Terpene cyclase adrI (247 aa).

The next 5 helical transmembrane spans lie at 20–40 (VAEF…FSML), 51–71 (TGIF…FIYP), 76–96 (HWEG…FFII), 112–132 (NLYF…YSFA), and 141–161 (FFYG…AQIL). N-linked (GlcNAc...) asparagine glycosylation is present at asparagine 164. The next 2 membrane-spanning stretches (helical) occupy residues 179–199 (FGGF…GPWF) and 205–225 (KFYI…YYVI).

It belongs to the paxB family.

It localises to the membrane. It functions in the pathway secondary metabolite biosynthesis; terpenoid biosynthesis. In terms of biological role, terpene cyclase; part of the gene cluster that mediates the biosynthesis of andrastins, meroterpenoid compounds that exhibit inhibitory activity against ras farnesyltransferase, suggesting that they could be promising leads for antitumor agents. The first step of the pathway is the synthesis of 3,5-dimethylorsellinic acid (DMOA) by the polyketide synthase adrD via condensation of one acetyl-CoA starter unit with 3 malonyl-CoA units and 2 methylations. DMAO is then converted to farnesyl-DMAO by the prenyltransferase adrG. The methyltransferase adrK catalyzes the methylation of the carboxyl group of farnesyl-DMAO to farnesyl-DMAO methyl ester which is further converted to epoxyfarnesyl-DMAO methyl ester by the FAD-dependent monooxygenase adrH. The terpene cyclase adrI then catalyzes the carbon skeletal rearrangement to generate the andrastin E, the first compound in the pathway having the andrastin scaffold, with the tetracyclic ring system. The post-cyclization tailoring enzymes adrF, adrE, adrJ, and adrA, are involved in the conversion of andrastin E into andrastin A. The short chain dehydrogenase adrF is responsible for the oxidation of the C-3 a hydroxyl group of andrastin E to yield the corresponding ketone, andrastin D. The ketoreductase adrE stereoselectively reduces the carbonyl moiety to reverse the stereochemistry of the C-3 position to yield andrastin F. The acetyltransferase adrJ is the acetyltransferase that attaches the acetyl group to the C-3 hydroxyl group of andrastin F to yield andrastin C. Finally, the cytochrome P450 monooxygenase adrA catalyzes two sequential oxidation reactions of the C-23 methyl group, to generate the corresponding alcohol andrastin B, and aldehyde andrastin A. The protein is Terpene cyclase adrI of Penicillium rubens (strain ATCC 28089 / DSM 1075 / NRRL 1951 / Wisconsin 54-1255) (Penicillium chrysogenum).